The primary structure comprises 428 residues: Glutamate-1-semialdehyde 2,1-aminomutase 1 (428 aa).

K268 bears the N6-(pyridoxal phosphate)lysine mark.

It belongs to the class-III pyridoxal-phosphate-dependent aminotransferase family. HemL subfamily. In terms of assembly, homodimer. It depends on pyridoxal 5'-phosphate as a cofactor.

The protein localises to the cytoplasm. The catalysed reaction is (S)-4-amino-5-oxopentanoate = 5-aminolevulinate. It functions in the pathway porphyrin-containing compound metabolism; protoporphyrin-IX biosynthesis; 5-aminolevulinate from L-glutamyl-tRNA(Glu): step 2/2. The polypeptide is Glutamate-1-semialdehyde 2,1-aminomutase 1 (Geobacillus kaustophilus (strain HTA426)).